Reading from the N-terminus, the 147-residue chain is Globin (147 aa).

The Globin domain maps to 1 to 147; sequence GLDGAQKTAL…LLTMLIKAHV (147 aa). The heme b site is built by His66 and His98.

The protein belongs to the globin family. In terms of assembly, homodimer.

The protein resides in the cytoplasm. This Busycotypus canaliculatus (Channeled whelk) protein is Globin.